A 396-amino-acid chain; its full sequence is 1-deoxy-D-xylulose 5-phosphate reductoisomerase (396 aa).

Thr-13, Gly-14, Ser-15, Ile-16, and Asn-127 together coordinate NADPH. Position 128 (Lys-128) interacts with 1-deoxy-D-xylulose 5-phosphate. NADPH is bound at residue Glu-129. Position 153 (Asp-153) interacts with Mn(2+). 1-deoxy-D-xylulose 5-phosphate is bound by residues Ser-154, Glu-155, Ser-184, and His-207. Glu-155 serves as a coordination point for Mn(2+). Gly-213 is a binding site for NADPH. Residues Ser-220, Asn-225, Lys-226, and Glu-229 each coordinate 1-deoxy-D-xylulose 5-phosphate. Glu-229 lines the Mn(2+) pocket.

This sequence belongs to the DXR family. Requires Mg(2+) as cofactor. It depends on Mn(2+) as a cofactor.

The enzyme catalyses 2-C-methyl-D-erythritol 4-phosphate + NADP(+) = 1-deoxy-D-xylulose 5-phosphate + NADPH + H(+). Its pathway is isoprenoid biosynthesis; isopentenyl diphosphate biosynthesis via DXP pathway; isopentenyl diphosphate from 1-deoxy-D-xylulose 5-phosphate: step 1/6. Catalyzes the NADPH-dependent rearrangement and reduction of 1-deoxy-D-xylulose-5-phosphate (DXP) to 2-C-methyl-D-erythritol 4-phosphate (MEP). This chain is 1-deoxy-D-xylulose 5-phosphate reductoisomerase, found in Pseudomonas putida (strain W619).